Consider the following 96-residue polypeptide: Cytochrome oxidase assembly factor 4 (96 aa).

Residues 36 to 77 form the CHCH domain; it reads KTGCYVENLALQLCHAETGDWRQCFNEMALFRKCWEKNGNRE. Short sequence motifs (cx9C motif) lie at residues 39–49 and 59–69; these read CYVENLALQLC and CFNEMALFRKC. 2 disulfide bridges follow: Cys-39–Cys-69 and Cys-49–Cys-59.

It belongs to the COA4 family.

The protein localises to the mitochondrion inner membrane. It is found in the mitochondrion intermembrane space. Involved in cytochrome c oxidase assembly or stability. This chain is Cytochrome oxidase assembly factor 4 (COA4), found in Saccharomyces cerevisiae (strain ATCC 204508 / S288c) (Baker's yeast).